The chain runs to 528 residues: Low affinity inorganic phosphate transporter 4 (528 aa).

Over methionine 1–histidine 18 the chain is Cytoplasmic. A helical transmembrane segment spans residues valine 19–isoleucine 39. The Extracellular segment spans residues serine 40 to asparagine 68. Residues valine 69 to glycine 89 form a helical membrane-spanning segment. Residues aspartate 90–lysine 96 lie on the Cytoplasmic side of the membrane. Residues valine 97 to glycine 117 traverse the membrane as a helical segment. The Extracellular segment spans residues serine 118–serine 122. A helical transmembrane segment spans residues valine 123–proline 143. The Cytoplasmic portion of the chain corresponds to leucine 144–arginine 158. Residues glycine 159–valine 179 form a helical membrane-spanning segment. Residues serine 180–glycine 208 are Extracellular-facing. Residues aspartate 209 to tryptophan 229 traverse the membrane as a helical segment. Over arginine 230 to histidine 292 the chain is Cytoplasmic. The chain crosses the membrane as a helical span at residues leucine 293–threonine 313. The Extracellular segment spans residues glutamine 314–arginine 341. A helical transmembrane segment spans residues alanine 342–isoleucine 362. Topologically, residues glutamate 363–glutamine 371 are cytoplasmic. The chain crosses the membrane as a helical span at residues leucine 372–leucine 392. Residues lysine 393 to alanine 401 are Extracellular-facing. The chain crosses the membrane as a helical span at residues leucine 402–leucine 422. At proline 423–serine 433 the chain is on the cytoplasmic side. The chain crosses the membrane as a helical span at residues threonine 434–isoleucine 454. Topologically, residues glutamine 455–arginine 468 are extracellular. Residues alanine 469 to glutamate 489 traverse the membrane as a helical segment. Over threonine 490–methionine 528 the chain is Cytoplasmic. Over residues glutamate 497 to glutamate 507 the composition is skewed to basic and acidic residues. Positions glutamate 497–methionine 528 are disordered.

Belongs to the major facilitator superfamily. Phosphate:H(+) symporter (TC 2.A.1.9) family. Mostly expressed in mycorrhizal roots. Also observed in root tips of non-mycorrhizal roots, in a phosphate (Pi) depended-manner, highest expression levels being observed in low Pi conditions.

The protein localises to the cell membrane. The enzyme catalyses phosphate(in) + H(+)(in) = phosphate(out) + H(+)(out). In terms of biological role, low-affinity transporter for external inorganic phosphate (Pi) probably involved in the acquisition of phosphate released by arbuscular mycorrhizal (AM) fungi (e.g. Gigaspora gigantea, Glomus versiforme and G.intraradices) during AM symbiosis; required for propper mycorrhizal arbuscule morphology. Acts as a Pi-sensing machinery at the root tip level, independently of AM fungi, involved in the regulation of early root branching and lateral roots formation. The protein is Low affinity inorganic phosphate transporter 4 of Medicago truncatula (Barrel medic).